A 72-amino-acid polypeptide reads, in one-letter code: Gas vesicle protein A (72 aa).

This sequence belongs to the gas vesicle GvpA family. In terms of assembly, the gas vesicle shell is 2 nm thick and consists of a single layer of this protein. It forms helical ribs nearly perpendicular to the long axis of the vesicle.

The protein resides in the gas vesicle shell. Its function is as follows. Gas vesicles are hollow, gas filled proteinaceous nanostructures found in some microorganisms. During planktonic growth they allow positioning of the organism at a favorable depth for light or nutrient acquisition. GvpA forms the protein shell. The chain is Gas vesicle protein A from Haloquadratum walsbyi (strain DSM 16790 / HBSQ001).